The chain runs to 729 residues: MSKFIEPSSEDIKIEQLYKDMGLSDEEYAKVCDILGREPNFTEIGIFSVMWSEHCSYKHSKPFLTQFPTSGEHVLMGPGEGAGVVDIGDNQAVVFKVESHNHPSAVEPYQGAATGVGGIIRDIVSIGARPINLLNSLRFGELTEKQNRRLLRGVVAGIGGYGNCIGIPTTAGEIEFDDRYDGNPLVNAMCVGIIDHDMVQKGTAKGVGNSVIYVGLKTGRDGIHGATFASEELSEDSESKRPSVQIGDPFVGKKLMEATLEAITFDELVGIQDMGAAGLTSSSSEMAAKGGSGLHLRLEQVPTREQGISPYEMMLSETQERMLLVVEKGTEQKFLDLFDKHELDSAVIGEVTDTDRFVLTYEDEVFADIPVQPLSDEAPVYVLEGTSPEYNETKNDYSSVDVESVFDQLLQHPTIASKRYLYEQYDQQVGANTIVKPGLQASVVRVEGTDKAIASTIDGEARYVFNNPYEGGKIVVAEAYRNLISVGATPLAMTDCLNYGSPEKKEIYQQLADSTKGMAEACEVLSTPVVSGNVSLYNETRETSIFPTPVVGMVGLIDDISYLNHFNPSVGDTLYVVGDTNDDFGGSQIEKLLYGQVNHEFESIDLSQEVRKGESIKQAIREGVASHVQTVGKGGLLLTLARISAHYQLGLQAKLSVTNAQLFSETQGRYIVIVKNGQSLNCDYAVEIGKVTNDQQFKVTNEQSEIVRDVKHLNDLWEGAIPQCMTATD.

H54 is an active-site residue. ATP is bound by residues Y57 and K96. Position 98 (E98) interacts with Mg(2+). Substrate is bound by residues 99-102 (SHNH) and R121. H100 acts as the Proton acceptor in catalysis. D122 provides a ligand contact to Mg(2+). Q245 lines the substrate pocket. D273 is a binding site for Mg(2+). Substrate is bound at residue 317 to 319 (ETQ). D495 and G532 together coordinate ATP. A Mg(2+)-binding site is contributed by N533. Residue S535 participates in substrate binding.

It belongs to the FGAMS family. In terms of assembly, monomer. Part of the FGAM synthase complex composed of 1 PurL, 1 PurQ and 2 PurS subunits.

It is found in the cytoplasm. The catalysed reaction is N(2)-formyl-N(1)-(5-phospho-beta-D-ribosyl)glycinamide + L-glutamine + ATP + H2O = 2-formamido-N(1)-(5-O-phospho-beta-D-ribosyl)acetamidine + L-glutamate + ADP + phosphate + H(+). It functions in the pathway purine metabolism; IMP biosynthesis via de novo pathway; 5-amino-1-(5-phospho-D-ribosyl)imidazole from N(2)-formyl-N(1)-(5-phospho-D-ribosyl)glycinamide: step 1/2. In terms of biological role, part of the phosphoribosylformylglycinamidine synthase complex involved in the purines biosynthetic pathway. Catalyzes the ATP-dependent conversion of formylglycinamide ribonucleotide (FGAR) and glutamine to yield formylglycinamidine ribonucleotide (FGAM) and glutamate. The FGAM synthase complex is composed of three subunits. PurQ produces an ammonia molecule by converting glutamine to glutamate. PurL transfers the ammonia molecule to FGAR to form FGAM in an ATP-dependent manner. PurS interacts with PurQ and PurL and is thought to assist in the transfer of the ammonia molecule from PurQ to PurL. In Staphylococcus saprophyticus subsp. saprophyticus (strain ATCC 15305 / DSM 20229 / NCIMB 8711 / NCTC 7292 / S-41), this protein is Phosphoribosylformylglycinamidine synthase subunit PurL.